The sequence spans 603 residues: Methylenetetrahydrofolate reductase 1 (603 aa).

Glu21 (proton donor/acceptor) is an active-site residue. Residues Glu21–Lys26 and Thr53–Trp54 contribute to the NAD(+) site. FAD contacts are provided by residues Thr53–Trp54, His82, Arg112–Asp114, Tyr130–Ala131, Tyr153, and Lys173. Asp114 is a binding site for substrate. Gln184 and Tyr276 together coordinate substrate. Ser355 is modified (phosphoserine).

Belongs to the methylenetetrahydrofolate reductase family. FAD serves as cofactor.

It carries out the reaction (6S)-5-methyl-5,6,7,8-tetrahydrofolate + NADP(+) = (6R)-5,10-methylene-5,6,7,8-tetrahydrofolate + NADPH + H(+). The catalysed reaction is (6S)-5-methyl-5,6,7,8-tetrahydrofolate + NAD(+) = (6R)-5,10-methylene-5,6,7,8-tetrahydrofolate + NADH + H(+). The protein operates within one-carbon metabolism; tetrahydrofolate interconversion. Major methylenetetrahydrofolate reductase required to generate the methyl groups necessary for methionine synthetase to convert homocysteine to methionine. Performs 80 to 85 percent of the total methylenetetrahydrofolate reductase activity of the cells. The protein is Methylenetetrahydrofolate reductase 1 (met9) of Schizosaccharomyces pombe (strain 972 / ATCC 24843) (Fission yeast).